The chain runs to 1316 residues: DNA-directed RNA polymerase subunit beta' (1316 aa).

Zn(2+) contacts are provided by Cys-60, Cys-62, Cys-75, and Cys-78. Mg(2+) is bound by residues Asp-535, Asp-537, and Asp-539. Zn(2+)-binding residues include Cys-891, Cys-968, Cys-975, and Cys-978.

The protein belongs to the RNA polymerase beta' chain family. The RNAP catalytic core consists of 2 alpha, 1 beta, 1 beta' and 1 omega subunit. When a sigma factor is associated with the core the holoenzyme is formed, which can initiate transcription. Mg(2+) serves as cofactor. The cofactor is Zn(2+).

It catalyses the reaction RNA(n) + a ribonucleoside 5'-triphosphate = RNA(n+1) + diphosphate. DNA-dependent RNA polymerase catalyzes the transcription of DNA into RNA using the four ribonucleoside triphosphates as substrates. This Mycobacterium tuberculosis (strain CDC 1551 / Oshkosh) protein is DNA-directed RNA polymerase subunit beta'.